Reading from the N-terminus, the 913-residue chain is Polyribonucleotide nucleotidyltransferase (913 aa).

A disordered region spans residues 407-427; that stretch reads YMHNYEMPPYSTGETGRVGSP. The Mg(2+) site is built by aspartate 521 and aspartate 527. One can recognise a KH domain in the interval 587 to 646; the sequence is PRIITTSVPVEKIGEVIGPKGKMINQIQEDTGAEIAIEDDGTVFISSEGGEAAEKAKAII. An S1 motif domain is found at 658–730; sequence GETYNGKVVK…DRGKISLAIP (73 aa). A disordered region spans residues 727–913; it reads LAIPGFEDQE…VRRDFDPFED (187 aa). Composition is skewed to basic and acidic residues over residues 742–789, 797–865, and 872–898; these read SRGD…RRSD, DRPR…DRRG, and RGSD…ERTE.

Belongs to the polyribonucleotide nucleotidyltransferase family. The cofactor is Mg(2+).

The protein localises to the cytoplasm. The enzyme catalyses RNA(n+1) + phosphate = RNA(n) + a ribonucleoside 5'-diphosphate. Its function is as follows. Involved in mRNA degradation. Catalyzes the phosphorolysis of single-stranded polyribonucleotides processively in the 3'- to 5'-direction. This is Polyribonucleotide nucleotidyltransferase from Bifidobacterium longum (strain DJO10A).